We begin with the raw amino-acid sequence, 1044 residues long: Probable translation initiation factor IF-2 (1044 aa).

The 93-residue stretch at 173 to 265 (FAGTIFGREN…LSLILLRLGI (93 aa)) folds into the DOD-type homing endonuclease domain. The tr-type G domain maps to 451 to 668 (TTETHNFIAN…LIAGLSQKYL (218 aa)). GTP is bound by residues 524 to 528 (DTPGH) and 578 to 581 (NKID).

It belongs to the TRAFAC class translation factor GTPase superfamily. Classic translation factor GTPase family. IF-2 subfamily. This protein undergoes a protein self splicing that involves a post-translational excision of the intervening region (intein) followed by peptide ligation.

Its function is as follows. Function in general translation initiation by promoting the binding of the formylmethionine-tRNA to ribosomes. Seems to function along with eIF-2. This Pyrococcus horikoshii (strain ATCC 700860 / DSM 12428 / JCM 9974 / NBRC 100139 / OT-3) protein is Probable translation initiation factor IF-2 (infB).